A 391-amino-acid chain; its full sequence is MGLRDPGAKRACPTFAGRKRHVVKIDTNTFKFGFLNPQVRLYGYHQIRLVIRYGNIGRSTRLGRLLGKLSAAECDALDLELNKLRANESLDPQESELVLGRVLEPLFGIEGYEVEHTGGLNDQGIDFRASRTADETSSAPAETIGVQAKFYRKTVSRVGMADLQKLIGAALLQDLTRVVLVSNGEFPREAHAAVEKSLPLRIELLDIGGMRAWISRLREEKVDVEAEVRIMLRDLSSGLARLIAKSPDALDHLEWRMVEQVVAEVFEGLGFAVTLTPGSKDGGKDVILTCTVRGKLAEYYVEIKHWRSSTKVGSAAVEKLLKIIVEEKKDGGLFLSTYGFTSNAFEQLTTIAKHKLKFGDQEKIVTFCQTYVKAKAGLWSPPENLTEVLFA.

This is an uncharacterized protein from Sinorhizobium fredii (strain NBRC 101917 / NGR234).